A 182-amino-acid polypeptide reads, in one-letter code: Ribosome maturation factor RimP (182 aa).

The protein belongs to the RimP family.

The protein resides in the cytoplasm. In terms of biological role, required for maturation of 30S ribosomal subunits. This chain is Ribosome maturation factor RimP, found in Corynebacterium efficiens (strain DSM 44549 / YS-314 / AJ 12310 / JCM 11189 / NBRC 100395).